Here is a 303-residue protein sequence, read N- to C-terminus: Nod factor export ATP-binding protein I (303 aa).

One can recognise an ABC transporter domain in the interval 5-235 (LQMRNVRKLY…EIGCDVVEVY (231 aa)). Position 37–44 (37–44 (GPNGAGKT)) interacts with ATP.

This sequence belongs to the ABC transporter superfamily. Lipooligosaccharide exporter (TC 3.A.1.102) family. As to quaternary structure, the complex is composed of two ATP-binding proteins (NodI) and two transmembrane proteins (NodJ).

It localises to the cell inner membrane. Its function is as follows. Part of the ABC transporter complex NodIJ involved in the export of the nodulation factors (Nod factors), the bacterial signal molecules that induce symbiosis and subsequent nodulation induction. Nod factors are LCO (lipo-chitin oligosaccharide), a modified beta-1,4-linked N-acetylglucosamine oligosaccharide. This subunit is responsible for energy coupling to the transport system. This Cupriavidus metallidurans (strain ATCC 43123 / DSM 2839 / NBRC 102507 / CH34) (Ralstonia metallidurans) protein is Nod factor export ATP-binding protein I.